Consider the following 94-residue polypeptide: Aspartyl/glutamyl-tRNA(Asn/Gln) amidotransferase subunit C (94 aa).

It belongs to the GatC family. In terms of assembly, heterotrimer of A, B and C subunits.

It carries out the reaction L-glutamyl-tRNA(Gln) + L-glutamine + ATP + H2O = L-glutaminyl-tRNA(Gln) + L-glutamate + ADP + phosphate + H(+). The enzyme catalyses L-aspartyl-tRNA(Asn) + L-glutamine + ATP + H2O = L-asparaginyl-tRNA(Asn) + L-glutamate + ADP + phosphate + 2 H(+). Functionally, allows the formation of correctly charged Asn-tRNA(Asn) or Gln-tRNA(Gln) through the transamidation of misacylated Asp-tRNA(Asn) or Glu-tRNA(Gln) in organisms which lack either or both of asparaginyl-tRNA or glutaminyl-tRNA synthetases. The reaction takes place in the presence of glutamine and ATP through an activated phospho-Asp-tRNA(Asn) or phospho-Glu-tRNA(Gln). The protein is Aspartyl/glutamyl-tRNA(Asn/Gln) amidotransferase subunit C of Campylobacter jejuni subsp. doylei (strain ATCC BAA-1458 / RM4099 / 269.97).